The primary structure comprises 223 residues: Ubiquitin-conjugating enzyme E2 S (223 aa).

Met1 carries the post-translational modification N-acetylmethionine. The UBC core domain occupies 11 to 157 (HIIRLVYKEV…ARLLTEIHGG (147 aa)). The Glycyl thioester intermediate role is filled by Cys95. The tract at residues 155–223 (HGGAGGPSGG…TDKKRALRRL (69 aa)) is disordered. Residues 169–195 (GRATASGAAASTADPTAPGGPAGAEGP) are compositionally biased toward low complexity. Phosphoserine is present on Ser174. The span at 209–223 (AAKKKTDKKRALRRL) shows a compositional bias: basic residues.

The protein belongs to the ubiquitin-conjugating enzyme family. In terms of assembly, component of the APC/C complex, composed of at least 14 distinct subunits that assemble into a complex of at least 19 chains with a combined molecular mass of around 1.2 MDa. Within this complex, directly interacts with ANAPC2 and ANAPC4. Interacts with CDC20, FZR1/CDH1 and VHL. In terms of processing, autoubiquitinated by the APC/C complex during G1, leading to its degradation by the proteasome.

The enzyme catalyses S-ubiquitinyl-[E1 ubiquitin-activating enzyme]-L-cysteine + [E2 ubiquitin-conjugating enzyme]-L-cysteine = [E1 ubiquitin-activating enzyme]-L-cysteine + S-ubiquitinyl-[E2 ubiquitin-conjugating enzyme]-L-cysteine.. Its pathway is protein modification; protein ubiquitination. Functionally, accepts ubiquitin from the E1 complex and catalyzes its covalent attachment to other proteins. Catalyzes 'Lys-11'-linked polyubiquitination. Acts as an essential factor of the anaphase promoting complex/cyclosome (APC/C), a cell cycle-regulated ubiquitin ligase that controls progression through mitosis. Acts by specifically elongating 'Lys-11'-linked polyubiquitin chains initiated by the E2 enzyme UBE2C/UBCH10 on APC/C substrates, enhancing the degradation of APC/C substrates by the proteasome and promoting mitotic exit. Also acts by elongating ubiquitin chains initiated by the E2 enzyme UBE2D1/UBCH5 in vitro; it is however unclear whether UBE2D1/UBCH5 acts as an E2 enzyme for the APC/C in vivo. Also involved in ubiquitination and subsequent degradation of VHL, resulting in an accumulation of HIF1A. In vitro able to promote polyubiquitination using all 7 ubiquitin Lys residues, except 'Lys-48'-linked polyubiquitination. This Bos taurus (Bovine) protein is Ubiquitin-conjugating enzyme E2 S (UBE2S).